We begin with the raw amino-acid sequence, 665 residues long: UvrABC system protein B (665 aa).

In terms of domain architecture, Helicase ATP-binding spans 25–412 (ASIEGGNRYQ…ENRIVEQVIR (388 aa)). 38–45 (GATGTGKT) serves as a coordination point for ATP. Positions 91–114 (YYDYYQPEAYIPVTDTYIEKTAAI) match the Beta-hairpin motif. Positions 429–583 (QIDDLLGEIK…VAYNKLHGIT (155 aa)) constitute a Helicase C-terminal domain. The UVR domain maps to 626 to 661 (PNLIDKLEAQMKEASKKLEFEEAAKLRDRIKQLRDK).

Belongs to the UvrB family. Forms a heterotetramer with UvrA during the search for lesions. Interacts with UvrC in an incision complex.

Its subcellular location is the cytoplasm. In terms of biological role, the UvrABC repair system catalyzes the recognition and processing of DNA lesions. A damage recognition complex composed of 2 UvrA and 2 UvrB subunits scans DNA for abnormalities. Upon binding of the UvrA(2)B(2) complex to a putative damaged site, the DNA wraps around one UvrB monomer. DNA wrap is dependent on ATP binding by UvrB and probably causes local melting of the DNA helix, facilitating insertion of UvrB beta-hairpin between the DNA strands. Then UvrB probes one DNA strand for the presence of a lesion. If a lesion is found the UvrA subunits dissociate and the UvrB-DNA preincision complex is formed. This complex is subsequently bound by UvrC and the second UvrB is released. If no lesion is found, the DNA wraps around the other UvrB subunit that will check the other stand for damage. The chain is UvrABC system protein B from Nostoc sp. (strain PCC 7120 / SAG 25.82 / UTEX 2576).